A 621-amino-acid chain; its full sequence is Chaperone protein DnaK (621 aa).

The residue at position 202 (Thr202) is a Phosphothreonine; by autocatalysis. Residues 596–621 are disordered; it reads SQFAQAAKQNEEKKEEDKKDSEESKN. Positions 604 to 621 are enriched in basic and acidic residues; that stretch reads QNEEKKEEDKKDSEESKN.

This sequence belongs to the heat shock protein 70 family.

Functionally, acts as a chaperone. This chain is Chaperone protein DnaK, found in Malacoplasma penetrans (strain HF-2) (Mycoplasma penetrans).